Here is a 1137-residue protein sequence, read N- to C-terminus: Otoancorin (1137 aa).

Positions 1–23 (MSQGPRTCSLLLVLLLSHGGAYQ) are cleaved as a signal peptide. Residues asparagine 156, asparagine 211, asparagine 244, asparagine 289, asparagine 321, asparagine 380, asparagine 384, asparagine 530, asparagine 594, asparagine 740, and asparagine 798 are each glycosylated (N-linked (GlcNAc...) asparagine). Residues 1095 to 1115 (HSWQTDPLSSSPTWPASTGSP) show a composition bias toward polar residues. The tract at residues 1095 to 1119 (HSWQTDPLSSSPTWPASTGSPTGEP) is disordered. The GPI-anchor amidated glycine moiety is linked to residue glycine 1113. Residues 1114 to 1137 (SPTGEPASQALWLGCTLLLLTAKS) constitute a propeptide, removed in mature form.

This sequence belongs to the stereocilin family. Expressed in the inner ear and vestibule.

It localises to the apical cell membrane. The protein resides in the secreted. It is found in the extracellular space. Its subcellular location is the extracellular matrix. Its function is as follows. May act as an adhesion molecule. In Mus musculus (Mouse), this protein is Otoancorin (Otoa).